The chain runs to 1378 residues: DNA-directed RNA polymerase subunit beta (1378 aa).

Belongs to the RNA polymerase beta chain family. In terms of assembly, the RNAP catalytic core consists of 2 alpha, 1 beta, 1 beta' and 1 omega subunit. When a sigma factor is associated with the core the holoenzyme is formed, which can initiate transcription.

The enzyme catalyses RNA(n) + a ribonucleoside 5'-triphosphate = RNA(n+1) + diphosphate. Its function is as follows. DNA-dependent RNA polymerase catalyzes the transcription of DNA into RNA using the four ribonucleoside triphosphates as substrates. The sequence is that of DNA-directed RNA polymerase subunit beta from Sorangium cellulosum (strain So ce56) (Polyangium cellulosum (strain So ce56)).